The chain runs to 637 residues: MQGTVNSERLKFDAEVGKVLKLVIHSLYTNKDIFLRELISNASDACDKLRYQSLSNQDLMDAGSELKIVISVDKDKNRLYISDNGIGMNREDLINNLGTIAHSGTQKFLDAINSGASSQQGVVELIGKFGVGFYSAFMVASEVIVESCKAGESVGYQWKSSGDGEFVISQLESDQVSRGTRITLALKPEECEFVDKFRIEHIVTTYSYHINYPVYFLNDKGEEERLNSEAAIWTKAKDEISAEEHQNFFRTVAHVGGEPWMILHNKNEGVIEYTNLLYIPSIKPFDLFHPDRKCSVKLYVNKVFITEDNVQIIPQYLRFLKGIIDSSDLPLNISRETLQNNKIIEKIKRSLVKRVLSELKKKAESNIEDYTKFWDNFGSVLKEGLCESMNTEFREELISVCRFYSTHSNDSLISLEDYIERMKPEQNNIYYLTGNDLDSIKKSPQLEGFVSRGIEVLLLVDPVDDFWTNVVTDYQKVPLRSVIRADEDLEKFSDVEKDDESKESQNEDAQSKEKVDKFISYAAQVLTNLVSNVRVSKKLTDSPVCLAVADGSMDIRMERFLREQKQLNYKSTKILEINSKHPIVSKMIDQYAENGENAVLCNMLHLLLGQACILEGEELQNVSDFAERMNNVLSQIN.

The interval Met1 to Arg335 is a; substrate-binding. The b stretch occupies residues Glu336–Arg559. The tract at residues Phe560–Asn637 is c.

This sequence belongs to the heat shock protein 90 family. Homodimer.

The protein localises to the cytoplasm. Functionally, molecular chaperone. Has ATPase activity. This Ehrlichia ruminantium (strain Welgevonden) protein is Chaperone protein HtpG.